Reading from the N-terminus, the 126-residue chain is Protein FMP49, mitochondrial (126 aa).

Its subcellular location is the mitochondrion. The protein is Protein FMP49, mitochondrial of Saccharomyces cerevisiae (strain ATCC 204508 / S288c) (Baker's yeast).